We begin with the raw amino-acid sequence, 250 residues long: Type III pantothenate kinase (250 aa).

6 to 13 (DVGNTNTV) lines the ATP pocket. Residue 103-106 (GADR) participates in substrate binding. Residue D105 is the Proton acceptor of the active site. D125 contributes to the K(+) binding site. T128 contributes to the ATP binding site. T180 lines the substrate pocket.

Belongs to the type III pantothenate kinase family. Homodimer. NH4(+) serves as cofactor. K(+) is required as a cofactor.

It is found in the cytoplasm. The enzyme catalyses (R)-pantothenate + ATP = (R)-4'-phosphopantothenate + ADP + H(+). Its pathway is cofactor biosynthesis; coenzyme A biosynthesis; CoA from (R)-pantothenate: step 1/5. Catalyzes the phosphorylation of pantothenate (Pan), the first step in CoA biosynthesis. In Frankia alni (strain DSM 45986 / CECT 9034 / ACN14a), this protein is Type III pantothenate kinase.